The sequence spans 273 residues: Formamidopyrimidine-DNA glycosylase (273 aa).

Residue proline 2 is the Schiff-base intermediate with DNA of the active site. Glutamate 3 functions as the Proton donor in the catalytic mechanism. Lysine 58 acts as the Proton donor; for beta-elimination activity in catalysis. The DNA site is built by histidine 92, arginine 111, and lysine 153. The FPG-type zinc-finger motif lies at 238–272 (MVYARDGQECLSCSSSIIKTKHSGRSTFYCKSCQK). The active-site Proton donor; for delta-elimination activity is arginine 262.

Belongs to the FPG family. As to quaternary structure, monomer. The cofactor is Zn(2+).

The catalysed reaction is Hydrolysis of DNA containing ring-opened 7-methylguanine residues, releasing 2,6-diamino-4-hydroxy-5-(N-methyl)formamidopyrimidine.. It catalyses the reaction 2'-deoxyribonucleotide-(2'-deoxyribose 5'-phosphate)-2'-deoxyribonucleotide-DNA = a 3'-end 2'-deoxyribonucleotide-(2,3-dehydro-2,3-deoxyribose 5'-phosphate)-DNA + a 5'-end 5'-phospho-2'-deoxyribonucleoside-DNA + H(+). Functionally, involved in base excision repair of DNA damaged by oxidation or by mutagenic agents. Acts as a DNA glycosylase that recognizes and removes damaged bases. Has a preference for oxidized purines, such as 7,8-dihydro-8-oxoguanine (8-oxoG). Has AP (apurinic/apyrimidinic) lyase activity and introduces nicks in the DNA strand. Cleaves the DNA backbone by beta-delta elimination to generate a single-strand break at the site of the removed base with both 3'- and 5'-phosphates. This is Formamidopyrimidine-DNA glycosylase from Rickettsia bellii (strain OSU 85-389).